Consider the following 67-residue polypeptide: Ferredoxin FdxE (67 aa).

[3Fe-4S] cluster is bound by residues Cys-10, Val-11, Gln-15, Cys-16, and Cys-54.

In terms of assembly, interacts with the cytochrome P450 143 with high affinity (Kd=84 nM). It depends on [3Fe-4S] cluster as a cofactor.

Ferredoxin that is the redox partner of cytochrome CYP143, a cytochrome P450 encoded by an adjacent gene. In Mycobacterium tuberculosis (strain ATCC 25618 / H37Rv), this protein is Ferredoxin FdxE.